We begin with the raw amino-acid sequence, 352 residues long: Selenide, water dikinase (352 aa).

C23 is an active-site residue. ATP is bound by residues K26 and S54–D56. Mg(2+) is bound at residue D57. ATP is bound by residues D74, D97, and G145–S147. A Mg(2+)-binding site is contributed by D97. D233 contributes to the Mg(2+) binding site.

The protein belongs to the selenophosphate synthase 1 family. Class I subfamily. In terms of assembly, homodimer. It depends on Mg(2+) as a cofactor.

It carries out the reaction hydrogenselenide + ATP + H2O = selenophosphate + AMP + phosphate + 2 H(+). Its function is as follows. Synthesizes selenophosphate from selenide and ATP. The sequence is that of Selenide, water dikinase from Shewanella baltica (strain OS223).